A 197-amino-acid polypeptide reads, in one-letter code: uncharacterized protein (197 aa).

The chain crosses the membrane as a helical span at residues 150–172 (SLKLNTTLPMFALNLICLLRSIL).

The protein localises to the membrane. This is an uncharacterized protein from Saccharomyces cerevisiae (strain ATCC 204508 / S288c) (Baker's yeast).